The following is a 223-amino-acid chain: ATP synthase subunit a 1 (223 aa).

A run of 5 helical transmembrane segments spans residues 20–40 (QTIV…AFLT), 78–98 (YLSY…FTII), 107–127 (SLST…LYGI), 173–193 (VMII…LMSV), and 194–214 (LGLL…TVYI).

The protein belongs to the ATPase A chain family. In terms of assembly, F-type ATPases have 2 components, CF(1) - the catalytic core - and CF(0) - the membrane proton channel. CF(1) has five subunits: alpha(3), beta(3), gamma(1), delta(1), epsilon(1). CF(0) has four main subunits: a, b, b' and c.

It is found in the cell inner membrane. In terms of biological role, key component of the proton channel; it plays a direct role in the translocation of protons across the membrane. This Prosthecochloris aestuarii (strain DSM 271 / SK 413) protein is ATP synthase subunit a 1.